A 200-amino-acid chain; its full sequence is Ribonuclease HII (200 aa).

Positions 10–200 (LIEAGCDEAG…LGDGQLNLNF (191 aa)) constitute an RNase H type-2 domain. A divalent metal cation-binding residues include Asp-16, Glu-17, and Asp-108.

This sequence belongs to the RNase HII family. It depends on Mn(2+) as a cofactor. Mg(2+) is required as a cofactor.

The protein resides in the cytoplasm. The enzyme catalyses Endonucleolytic cleavage to 5'-phosphomonoester.. In terms of biological role, endonuclease that specifically degrades the RNA of RNA-DNA hybrids. In Bacteroides thetaiotaomicron (strain ATCC 29148 / DSM 2079 / JCM 5827 / CCUG 10774 / NCTC 10582 / VPI-5482 / E50), this protein is Ribonuclease HII.